The following is a 354-amino-acid chain: Uroporphyrinogen decarboxylase (354 aa).

Substrate contacts are provided by residues 27 to 31 (RQAGR), D77, Y153, T208, and H326.

Belongs to the uroporphyrinogen decarboxylase family. Homodimer.

The protein resides in the cytoplasm. The enzyme catalyses uroporphyrinogen III + 4 H(+) = coproporphyrinogen III + 4 CO2. It functions in the pathway porphyrin-containing compound metabolism; protoporphyrin-IX biosynthesis; coproporphyrinogen-III from 5-aminolevulinate: step 4/4. In terms of biological role, catalyzes the decarboxylation of four acetate groups of uroporphyrinogen-III to yield coproporphyrinogen-III. The protein is Uroporphyrinogen decarboxylase of Neisseria gonorrhoeae (strain NCCP11945).